The sequence spans 347 residues: UPF0284 protein YN1551_0030 (347 aa).

This sequence belongs to the UPF0284 family.

The protein is UPF0284 protein YN1551_0030 of Saccharolobus islandicus (strain Y.N.15.51 / Yellowstone #2) (Sulfolobus islandicus).